Here is a 99-residue protein sequence, read N- to C-terminus: Large ribosomal subunit protein uL23 (99 aa).

This sequence belongs to the universal ribosomal protein uL23 family. In terms of assembly, part of the 50S ribosomal subunit. Contacts protein L29, and trigger factor when it is bound to the ribosome.

Functionally, one of the early assembly proteins it binds 23S rRNA. One of the proteins that surrounds the polypeptide exit tunnel on the outside of the ribosome. Forms the main docking site for trigger factor binding to the ribosome. The sequence is that of Large ribosomal subunit protein uL23 from Agathobacter rectalis (strain ATCC 33656 / DSM 3377 / JCM 17463 / KCTC 5835 / VPI 0990) (Eubacterium rectale).